The following is a 594-amino-acid chain: Probable translation initiation factor IF-2 (594 aa).

The 218-residue stretch at 3–220 (IRSPIVSVLG…MLMGLAQQYL (218 aa)) folds into the tr-type G domain. The interval 12–19 (GHVDHGKT) is G1. 12-19 (GHVDHGKT) contributes to the GTP binding site. The interval 37-41 (GITQH) is G2. The segment at 76–79 (DTPG) is G3. Residues 76–80 (DTPGH) and 130–133 (NKID) contribute to the GTP site. Positions 130-133 (NKID) are G4. A G5 region spans residues 198-200 (SAI).

This sequence belongs to the TRAFAC class translation factor GTPase superfamily. Classic translation factor GTPase family. IF-2 subfamily.

In terms of biological role, function in general translation initiation by promoting the binding of the formylmethionine-tRNA to ribosomes. Seems to function along with eIF-2. The polypeptide is Probable translation initiation factor IF-2 (infB) (Methanothermobacter thermautotrophicus (strain ATCC 29096 / DSM 1053 / JCM 10044 / NBRC 100330 / Delta H) (Methanobacterium thermoautotrophicum)).